Consider the following 1149-residue polypeptide: Protein deacetylase HDAC6 (1149 aa).

The tract at residues 1–61 is disordered; sequence MTSTGQDSST…KGKMKKLSQP (61 aa). The span at 18–29 shows a compositional bias: polar residues; it reads NPQSPLQESSAT. Serine 21 carries the post-translational modification Phosphoserine. Arginine 32 carries the omega-N-methylarginine modification. Serine 43 is subject to Phosphoserine. Positions 66–75 match the Nuclear export signal motif; that stretch reads LVVGLQGLDL. Histone deacetylase stretches follow at residues 87–403 and 481–799; these read LVFD…TLLG and GLVY…SLLG. Residue histidine 215 is the 1 of the active site. Histidine 610 functions as the 2 in the catalytic mechanism. The segment at 954-975 is disordered; that stretch reads ALGETEPTPPASHTNKQTTGAS. Phosphothreonine occurs at positions 958, 961, 967, and 971. Residues 964–975 show a composition bias toward polar residues; that stretch reads ASHTNKQTTGAS. Serine 975 carries the post-translational modification Phosphoserine. A UBP-type zinc finger spans residues 1045–1143; sequence SWCPHLMAVC…NAAHQNKFGE (99 aa). Residues cysteine 1047, histidine 1049, cysteine 1067, cysteine 1070, cysteine 1079, cysteine 1082, and cysteine 1087 each contribute to the Zn(2+) site. The ubiquitin binding stretch occupies residues 1088–1090; it reads SRY. The Zn(2+) site is built by histidine 1094, histidine 1098, histidine 1104, cysteine 1117, and cysteine 1120. Residues 1116–1123 are ubiquitin binding; it reads WCYVCQAY. A Phosphoserine modification is found at serine 1148.

Belongs to the histone deacetylase family. HD type 2 subfamily. In terms of assembly, forms a trimeric complex in the nucleus consisting of BANP, HDAC6 and KHDRBS1/SAM68; HDAC6 keeps KHDRBS1 in a deacetylated state which inhibits the inclusion of CD44 alternate exons. The complex is disrupted by MAPK1/MAPK3-mediated phosphorylation of BANP which results in BANP export to the cytoplasm. This facilitates acetylation of KHDRBS1 and CD44 variant exon inclusion. Interacts with SIRT2 (via both phosphorylated, unphosphorylated, active or inactive forms); the interaction is necessary for the complex to interact with alpha-tubulin. Under proteasome impairment conditions, interacts with UBD via its histone deacetylase 1 and UBP-type zinc-finger regions. Interacts with BBIP1, CBFA2T3, CYLD, DDIT3/CHOP, ZMYND15, F-actin and HDAC11. Interacts with RIPOR2; this interaction occurs during early myogenic differentiation and prevents HDAC6 to deacetylate tubulin. Interacts with AURKA; AURKA-mediated phosphorylation of HDAC6 promotes deacetylation of alpha-tubulin. Interacts with DYSF; this interaction occurs during early myogenic differentiation. Interacts with TPPP; inhibiting the tubulin deacetylase activity of HDAC6. Interacts with DYNLL1. Interacts with ATP13A2; the interaction results in recruitment of HDAC6 to lysosomes to promote CTTN deacetylation. Interacts with CCDC141 (via the N-terminal region); inhibiting the deacetylase activity of HDAC6. Interacts with IPO7; the interaction facilitates HDAC6 nuclear translocation in dental papilla cells. Zn(2+) is required as a cofactor. Phosphorylated by AURKA; phosphorylation increases HDAC6-mediated deacetylation of alpha-tubulin and subsequent disassembly of cilia. In terms of processing, ubiquitinated. Its polyubiquitination however does not lead to its degradation. Post-translationally, sumoylated in vitro. As to expression, expressed in neurons of the cortex. Expressed in Purkinje cells. Detected in keratinocytes (at protein level).

The protein localises to the cytoplasm. Its subcellular location is the cytoskeleton. The protein resides in the nucleus. It is found in the perikaryon. It localises to the cell projection. The protein localises to the dendrite. Its subcellular location is the axon. The protein resides in the cilium. It is found in the microtubule organizing center. It localises to the centrosome. The protein localises to the cilium basal body. It catalyses the reaction N(6)-acetyl-L-lysyl-[protein] + H2O = L-lysyl-[protein] + acetate. The enzyme catalyses N(6)-acetyl-L-lysyl-[alpha-tubulin] + H2O = L-lysyl-[alpha-tubulin] + acetate. The protein operates within protein modification; protein ubiquitination. Functionally, deacetylates a wide range of non-histone substrates. Plays a central role in microtubule-dependent cell motility by mediating deacetylation of tubulin. Required for cilia disassembly via deacetylation of alpha-tubulin. Alpha-tubulin deacetylation results in destabilization of dynamic microtubules. Promotes deacetylation of CTTN, leading to actin polymerization, promotion of autophagosome-lysosome fusion and completion of autophagy. Deacetylates SQSTM1. Deacetylates peroxiredoxins PRDX1 and PRDX2, decreasing their reducing activity. Deacetylates antiviral protein RIGI in the presence of viral mRNAs which is required for viral RNA detection by RIGI. Sequentially deacetylates and polyubiquitinates DNA mismatch repair protein MSH2 which leads to MSH2 degradation, reducing cellular sensitivity to DNA-damaging agents and decreasing cellular DNA mismatch repair activities. Deacetylates DNA mismatch repair protein MLH1 which prevents recruitment of the MutL alpha complex (formed by the MLH1-PMS2 heterodimer) to the MutS alpha complex (formed by the MSH2-MSH6 heterodimer), leading to tolerance of DNA damage. Deacetylates RHOT1/MIRO1 which blocks mitochondrial transport and mediates axon growth inhibition. Deacetylates transcription factor SP1 which leads to increased expression of ENG, positively regulating angiogenesis. Deacetylates KHDRBS1/SAM68 which regulates alternative splicing by inhibiting the inclusion of CD44 alternate exons. Promotes odontoblast differentiation following IPO7-mediated nuclear import and subsequent repression of RUNX2 expression. In addition to its protein deacetylase activity, plays a key role in the degradation of misfolded proteins: when misfolded proteins are too abundant to be degraded by the chaperone refolding system and the ubiquitin-proteasome, mediates the transport of misfolded proteins to a cytoplasmic juxtanuclear structure called aggresome. Probably acts as an adapter that recognizes polyubiquitinated misfolded proteins and target them to the aggresome, facilitating their clearance by autophagy. This Mus musculus (Mouse) protein is Protein deacetylase HDAC6.